The primary structure comprises 137 residues: NADH-quinone oxidoreductase subunit A 1 (137 aa).

3 helical membrane-spanning segments follow: residues Phe14–Leu34, Phe66–Trp86, and Trp95–Leu115.

This sequence belongs to the complex I subunit 3 family. As to quaternary structure, NDH-1 is composed of 13 different subunits. Subunits NuoA, H, J, K, L, M, N constitute the membrane sector of the complex.

The protein localises to the cell inner membrane. The enzyme catalyses a quinone + NADH + 5 H(+)(in) = a quinol + NAD(+) + 4 H(+)(out). Its function is as follows. NDH-1 shuttles electrons from NADH, via FMN and iron-sulfur (Fe-S) centers, to quinones in the respiratory chain. The immediate electron acceptor for the enzyme in this species is believed to be ubiquinone. Couples the redox reaction to proton translocation (for every two electrons transferred, four hydrogen ions are translocated across the cytoplasmic membrane), and thus conserves the redox energy in a proton gradient. The chain is NADH-quinone oxidoreductase subunit A 1 from Pseudomonas paraeruginosa (strain DSM 24068 / PA7) (Pseudomonas aeruginosa (strain PA7)).